Here is a 335-residue protein sequence, read N- to C-terminus: tRNA N6-adenosine threonylcarbamoyltransferase (335 aa).

Fe cation contacts are provided by His111 and His115. Residues 133–137, Asp166, Gly179, and Asn276 contribute to the substrate site; that span reads LISGG. Position 301 (Asp301) interacts with Fe cation.

The protein belongs to the KAE1 / TsaD family. Fe(2+) serves as cofactor.

Its subcellular location is the cytoplasm. The enzyme catalyses L-threonylcarbamoyladenylate + adenosine(37) in tRNA = N(6)-L-threonylcarbamoyladenosine(37) in tRNA + AMP + H(+). In terms of biological role, required for the formation of a threonylcarbamoyl group on adenosine at position 37 (t(6)A37) in tRNAs that read codons beginning with adenine. Is involved in the transfer of the threonylcarbamoyl moiety of threonylcarbamoyl-AMP (TC-AMP) to the N6 group of A37, together with TsaE and TsaB. TsaD likely plays a direct catalytic role in this reaction. The sequence is that of tRNA N6-adenosine threonylcarbamoyltransferase from Wolbachia pipientis wMel.